Here is a 296-residue protein sequence, read N- to C-terminus: Lipoyl synthase (296 aa).

Positions 37, 42, 48, 63, 67, 70, and 276 each coordinate [4Fe-4S] cluster. One can recognise a Radical SAM core domain in the interval 49 to 265; sequence WSKKHATMMI…ERVARTKGFL (217 aa).

It belongs to the radical SAM superfamily. Lipoyl synthase family. The cofactor is [4Fe-4S] cluster.

The protein resides in the cytoplasm. The catalysed reaction is [[Fe-S] cluster scaffold protein carrying a second [4Fe-4S](2+) cluster] + N(6)-octanoyl-L-lysyl-[protein] + 2 oxidized [2Fe-2S]-[ferredoxin] + 2 S-adenosyl-L-methionine + 4 H(+) = [[Fe-S] cluster scaffold protein] + N(6)-[(R)-dihydrolipoyl]-L-lysyl-[protein] + 4 Fe(3+) + 2 hydrogen sulfide + 2 5'-deoxyadenosine + 2 L-methionine + 2 reduced [2Fe-2S]-[ferredoxin]. The protein operates within protein modification; protein lipoylation via endogenous pathway; protein N(6)-(lipoyl)lysine from octanoyl-[acyl-carrier-protein]: step 2/2. Its function is as follows. Catalyzes the radical-mediated insertion of two sulfur atoms into the C-6 and C-8 positions of the octanoyl moiety bound to the lipoyl domains of lipoate-dependent enzymes, thereby converting the octanoylated domains into lipoylated derivatives. The protein is Lipoyl synthase of Rickettsia canadensis (strain McKiel).